A 131-amino-acid chain; its full sequence is Small ribosomal subunit protein uS8 (131 aa).

The protein belongs to the universal ribosomal protein uS8 family. In terms of assembly, part of the 30S ribosomal subunit. Contacts proteins S5 and S12.

Functionally, one of the primary rRNA binding proteins, it binds directly to 16S rRNA central domain where it helps coordinate assembly of the platform of the 30S subunit. The protein is Small ribosomal subunit protein uS8 of Zymomonas mobilis subsp. mobilis (strain ATCC 31821 / ZM4 / CP4).